The chain runs to 218 residues: Probable GTP-binding protein EngB (218 aa).

The 175-residue stretch at 31–205 (SGIEIAFAGR…EQKVTSWYAQ (175 aa)) folds into the EngB-type G domain. GTP contacts are provided by residues 39–46 (GRSNAGKS), 66–70 (GRTQL), 84–87 (DLPG), 151–154 (TKAD), and 184–186 (FSS). Positions 46 and 68 each coordinate Mg(2+).

It belongs to the TRAFAC class TrmE-Era-EngA-EngB-Septin-like GTPase superfamily. EngB GTPase family. Mg(2+) serves as cofactor.

Necessary for normal cell division and for the maintenance of normal septation. The protein is Probable GTP-binding protein EngB of Psychromonas ingrahamii (strain DSM 17664 / CCUG 51855 / 37).